The chain runs to 360 residues: Phenylalanine--tRNA ligase alpha subunit (360 aa).

Position 260 (E260) interacts with Mg(2+).

This sequence belongs to the class-II aminoacyl-tRNA synthetase family. Phe-tRNA synthetase alpha subunit type 1 subfamily. In terms of assembly, tetramer of two alpha and two beta subunits. The cofactor is Mg(2+).

The protein resides in the cytoplasm. It catalyses the reaction tRNA(Phe) + L-phenylalanine + ATP = L-phenylalanyl-tRNA(Phe) + AMP + diphosphate + H(+). In Methylobacterium radiotolerans (strain ATCC 27329 / DSM 1819 / JCM 2831 / NBRC 15690 / NCIMB 10815 / 0-1), this protein is Phenylalanine--tRNA ligase alpha subunit.